Consider the following 146-residue polypeptide: COP9 signalosome complex subunit 9 (146 aa).

The region spanning 1–107 (MDSYKTQWLT…SVAREVKVLQ (107 aa)) is the PCI domain.

As to quaternary structure, component of a COP9 signalosome-like (CSN) complex.

It is found in the cytoplasm. The protein resides in the nucleus. Functionally, component of the COP9 signalosome (CSN) complex that acts as a regulator of the ubiquitin (Ubl) conjugation pathway by mediating the deneddylation of the cullin subunit of SCF-type E3 ubiquitin-protein ligase complexes. The CSN complex is involved in the regulation of the mating pheromone response. The polypeptide is COP9 signalosome complex subunit 9 (CSN9) (Candida glabrata (strain ATCC 2001 / BCRC 20586 / JCM 3761 / NBRC 0622 / NRRL Y-65 / CBS 138) (Yeast)).